The primary structure comprises 438 residues: Keratin, type I cytoskeletal 18 (438 aa).

Residues 4 to 83 (AVSSRSTVVS…TLSGNAVISN (80 aa)) are head. The coil 1A stretch occupies residues 84–119 (EKETMQDLNDRLSNYLETVRRLENANQQLEIQIREA). In terms of domain architecture, IF rod spans 84–395 (EKETMQDLND…HLLGGEDSDT (312 aa)). The segment at 120–136 (MEKRGPSVRDYSNYEKI) is linker 1. The segment at 137-228 (IKELRDQIYD…KNHEDEVIAL (92 aa)) is coil 1B. The interval 229–252 (RNQVNSCGVQVDLDAPKGTDLAEI) is linker 12. Residues 253-393 (MATLRAEYEA…YRHLLGGEDS (141 aa)) form a coil 2 region. The tract at residues 394-438 (DTLSLQDALSAMKVSNVQTVQKIVVTTQKLVDGKVVEDSTVTETK) is tail.

This sequence belongs to the intermediate filament family. As to quaternary structure, heterotetramer of two type I and two type II keratins. Keratin-18 associates with keratin-8. Post-translationally, phosphorylated. Proteolytically cleaved by caspases during epithelial cell apoptosis. Expressed at low levels in skin.

When phosphorylated, plays a role in filament reorganization. This Protopterus aethiopicus (Marbled lungfish) protein is Keratin, type I cytoskeletal 18.